The sequence spans 312 residues: Olfactory receptor 51B6 (312 aa).

Residues 1 to 23 (MGLNKSASTFQLTGFPGMEKAHH) are Extracellular-facing. Asn4 carries an N-linked (GlcNAc...) asparagine glycan. The helical transmembrane segment at 24–44 (WIFIPLLAAYISILLGNGTLL) threads the bilayer. Over 45-52 (FLIRNDHN) the chain is Cytoplasmic. A helical membrane pass occupies residues 53–73 (LHEPMYYFLAMLAATDLGVTL). At 74–97 (TTMPTVLGVLWLDHREIGHGACFS) the chain is on the extracellular side. Cys95 and Cys187 form a disulfide bridge. The helical transmembrane segment at 98–118 (QAYFIHTLSVMESGVLLAMAY) threads the bilayer. Residues 119 to 137 (DCFITIRSPLRYTSILTNT) are Cytoplasmic-facing. Residues 138-158 (QVMKIGVRVLTRAGLSIMPIV) form a helical membrane-spanning segment. Residues 159–194 (VRLHWFPYCRSHVLSHAFCLHQDVIKLACADITFNR) lie on the Extracellular side of the membrane. The helical transmembrane segment at 195 to 215 (LYPVVVLFAMVLLDFLIIFFS) threads the bilayer. At 216–235 (YILILKTVMGIGSGGERAKA) the chain is on the cytoplasmic side. Residues 236 to 256 (LNTCVSHICCILVFYVTVVCL) form a helical membrane-spanning segment. Residues 257-271 (TFIHRFGKHVPHVVH) lie on the Extracellular side of the membrane. The helical transmembrane segment at 272–292 (ITMSYIHFLFPPFMNPFIYSI) threads the bilayer. Topologically, residues 293–312 (KTKQIQSGILRLFSLPHSRA) are cytoplasmic.

This sequence belongs to the G-protein coupled receptor 1 family.

It is found in the cell membrane. Its function is as follows. Odorant receptor. The sequence is that of Olfactory receptor 51B6 (OR51B6) from Homo sapiens (Human).